Consider the following 131-residue polypeptide: UPF0102 protein YraN (131 aa).

The segment covering 1-19 (MATVPTRSGSPRQLTTKQT) has biased composition (polar residues). The tract at residues 1–21 (MATVPTRSGSPRQLTTKQTGD) is disordered.

Belongs to the UPF0102 family.

The polypeptide is UPF0102 protein YraN (Escherichia coli (strain K12 / MC4100 / BW2952)).